The sequence spans 173 residues: Flavodoxin 2 (173 aa).

Residues 3–165 (MGLFYGSSTC…RIQTWCEQIL (163 aa)) form the Flavodoxin-like domain.

The protein belongs to the flavodoxin family. The cofactor is FMN.

Its function is as follows. Low-potential electron donor to a number of redox enzymes. The chain is Flavodoxin 2 (fldB) from Salmonella typhi.